We begin with the raw amino-acid sequence, 338 residues long: Endonuclease V (338 aa).

Mg(2+) is bound by residues Asp52 and Asp126. A disordered region spans residues 253–338 (QLGVAPAQRK…PSPAWVQSPP (86 aa)). Composition is skewed to basic and acidic residues over residues 260–270 (QRKDRSQKEQR) and 287–323 (RPPE…HQED). Residues 328 to 338 (PPSPAWVQSPP) are compositionally biased toward pro residues.

The protein belongs to the endonuclease V family. In terms of assembly, monomer. Interacts with PABPC1; the interaction is RNA-dependent and stimulates ENDOV activity. It depends on Mg(2+) as a cofactor. In terms of tissue distribution, highest levels detected in liver with high levels also found in heart, kidney and testis. Expressed at low levels in brain.

The protein localises to the cytoplasm. Its subcellular location is the nucleus. It is found in the nucleolus. It localises to the stress granule. In terms of biological role, endoribonuclease that specifically cleaves inosine-containing RNAs: cleaves RNA at the second phosphodiester bond 3' to inosine. Active against both single-stranded and double-stranded RNAs. Has strong preference for single-stranded RNAs (ssRNAs) toward double-stranded RNAs (dsRNAs). Cleaves mRNAs and tRNAs containing inosine. Also able to cleave structure-specific dsRNA substrates containing the specific sites 5'-IIUI-3' and 5'-UIUU-3'. Inosine is present in a number of RNAs following editing; the function of inosine-specific endoribonuclease is still unclear: it could either play a regulatory role in edited RNAs, or be involved in antiviral response by removing the hyperedited long viral dsRNA genome that has undergone A-to-I editing. Binds branched DNA structures. The sequence is that of Endonuclease V (Endov) from Mus musculus (Mouse).